A 1076-amino-acid chain; its full sequence is DNA-directed RNA polymerase subunit beta (1076 aa).

The protein belongs to the RNA polymerase beta chain family. In terms of assembly, in plastids the minimal PEP RNA polymerase catalytic core is composed of four subunits: alpha, beta, beta', and beta''. When a (nuclear-encoded) sigma factor is associated with the core the holoenzyme is formed, which can initiate transcription.

The protein localises to the plastid. It localises to the chloroplast. The enzyme catalyses RNA(n) + a ribonucleoside 5'-triphosphate = RNA(n+1) + diphosphate. In terms of biological role, DNA-dependent RNA polymerase catalyzes the transcription of DNA into RNA using the four ribonucleoside triphosphates as substrates. The sequence is that of DNA-directed RNA polymerase subunit beta from Hordeum vulgare (Barley).